The chain runs to 989 residues: Cation-chloride cotransporter 1 (989 aa).

Residues 1 to 10 show a composition bias toward acidic residues; sequence MENGEIEGAA. Positions 1–29 are disordered; it reads MENGEIEGAADDGVPVPAPPNGRRYRPVG. At 1 to 132 the chain is on the cytoplasmic side; the sequence is MENGEIEGAA…GRPKETGPKF (132 aa). A helical membrane pass occupies residues 133-153; that stretch reads GTMMGVFVPCLQNILGIIYYI. Over 154–167 the chain is Extracellular; the sequence is RFTWIVGMAGVWQS. The helical transmembrane segment at 168-188 threads the bilayer; the sequence is LVLVSFCGACTFLTGISLSAI. Topologically, residues 189 to 214 are cytoplasmic; the sequence is ATNGAMKGGGPYYLIGRALGPEVGVS. A helical membrane pass occupies residues 215–235; sequence IGLCFFLGNAVAGSMYVLGAV. The Extracellular portion of the chain corresponds to 236–280; it reads ETFLDAVPSAGFFKESVTVVNNTLVNGTATASTATISTPSLHDLQ. Asn-256 and Asn-261 each carry an N-linked (GlcNAc...) asparagine glycan. The helical transmembrane segment at 281–301 threads the bilayer; that stretch reads VYGVIVTILLCFIVFGGVKII. Topologically, residues 302–304 are cytoplasmic; the sequence is NKV. A helical transmembrane segment spans residues 305 to 325; sequence APAFLIPVLFSLLCIYLGVFI. Over 326–365 the chain is Extracellular; the sequence is APRHNAPKGITGLSITTFKDNWGSEYQRTNNAGVPDPNGS. Asn-363 carries an N-linked (GlcNAc...) asparagine glycan. A helical membrane pass occupies residues 366–386; the sequence is IYWDFNALVGLFFPAVTGIMA. Residues 387 to 405 are Cytoplasmic-facing; the sequence is GSNRSASLKDTQRSIPIGT. The chain crosses the membrane as a helical span at residues 406 to 426; the sequence is LSATLTTTAMYLFSVLLFGAL. The Extracellular portion of the chain corresponds to 427-441; it reads ATREELLTDRLLTAT. A helical membrane pass occupies residues 442–462; it reads VAWPAPAVIYIGIILSTLGAA. Residues 463 to 498 are Cytoplasmic-facing; sequence LQSLTGAPRLLAAIANDDILPVLNYFKVSEGAEPHS. The chain crosses the membrane as a helical span at residues 499-519; the sequence is ATLFTAFICICCVVIGNLDLI. The Extracellular portion of the chain corresponds to 520 to 522; that stretch reads TPT. The helical transmembrane segment at 523–543 threads the bilayer; that stretch reads ITMFFLLCYAGVNLSCFLLDL. The Cytoplasmic segment spans residues 544-551; that stretch reads LDAPSWRP. The helical transmembrane segment at 552–572 threads the bilayer; sequence RWKFHHWSLSLVGALLCVVIM. Topologically, residues 573-578 are extracellular; the sequence is FLISWS. A helical transmembrane segment spans residues 579–599; the sequence is FTVVSLALASLIYYYVSLKGK. Residues 600–989 are Cytoplasmic-facing; sequence AGDWGDGFKS…YRRDVVTFFT (390 aa).

This sequence belongs to the SLC12A transporter family. Expressed in roots, stems and leaves with higher expression in root and leaf tips.

The protein localises to the membrane. Functionally, probable cation/chloride cotransporter that may mediate potassium-chloride cotransport. Involved in plant development and K(+) and Cl(-) homeostasis. May not be involved in sodium-chloride cotransport. This chain is Cation-chloride cotransporter 1 (CCC1), found in Oryza sativa subsp. japonica (Rice).